The sequence spans 218 residues: Probable nicotinate-nucleotide adenylyltransferase (218 aa).

Belongs to the NadD family.

The enzyme catalyses nicotinate beta-D-ribonucleotide + ATP + H(+) = deamido-NAD(+) + diphosphate. It participates in cofactor biosynthesis; NAD(+) biosynthesis; deamido-NAD(+) from nicotinate D-ribonucleotide: step 1/1. Its function is as follows. Catalyzes the reversible adenylation of nicotinate mononucleotide (NaMN) to nicotinic acid adenine dinucleotide (NaAD). The chain is Probable nicotinate-nucleotide adenylyltransferase from Burkholderia lata (strain ATCC 17760 / DSM 23089 / LMG 22485 / NCIMB 9086 / R18194 / 383).